The chain runs to 121 residues: Large ribosomal subunit protein bL21 (121 aa).

This sequence belongs to the bacterial ribosomal protein bL21 family. Part of the 50S ribosomal subunit. Contacts protein L20.

This protein binds to 23S rRNA in the presence of protein L20. The chain is Large ribosomal subunit protein bL21 from Gloeobacter violaceus (strain ATCC 29082 / PCC 7421).